The chain runs to 206 residues: Holliday junction branch migration complex subunit RuvA (206 aa).

The interval 1 to 63 (MIASLRGTVI…EDAMKLYGFI (63 aa)) is domain I. Residues 64–142 (DNESREMFSV…AFAAGVVDEA (79 aa)) form a domain II region. The flexible linker stretch occupies residues 143–153 (GEQISLPNANI). The interval 154-206 (ASEVVVEQVSQALVGLGFSEKQSDDAVSFVLAADPSLDTSGALRAALAKLSGK) is domain III.

It belongs to the RuvA family. Homotetramer. Forms an RuvA(8)-RuvB(12)-Holliday junction (HJ) complex. HJ DNA is sandwiched between 2 RuvA tetramers; dsDNA enters through RuvA and exits via RuvB. An RuvB hexamer assembles on each DNA strand where it exits the tetramer. Each RuvB hexamer is contacted by two RuvA subunits (via domain III) on 2 adjacent RuvB subunits; this complex drives branch migration. In the full resolvosome a probable DNA-RuvA(4)-RuvB(12)-RuvC(2) complex forms which resolves the HJ.

It localises to the cytoplasm. In terms of biological role, the RuvA-RuvB-RuvC complex processes Holliday junction (HJ) DNA during genetic recombination and DNA repair, while the RuvA-RuvB complex plays an important role in the rescue of blocked DNA replication forks via replication fork reversal (RFR). RuvA specifically binds to HJ cruciform DNA, conferring on it an open structure. The RuvB hexamer acts as an ATP-dependent pump, pulling dsDNA into and through the RuvAB complex. HJ branch migration allows RuvC to scan DNA until it finds its consensus sequence, where it cleaves and resolves the cruciform DNA. The chain is Holliday junction branch migration complex subunit RuvA from Corynebacterium glutamicum (strain R).